The following is a 144-amino-acid chain: Large ribosomal subunit protein uL15 (144 aa).

The disordered stretch occupies residues 1 to 49 (MRLNTLSPAAGSKSAPKRVGRGIGSGLGKTAGRGHKGQKSRSGGGVRVG). The segment covering 21–31 (RGIGSGLGKTA) has biased composition (gly residues).

This sequence belongs to the universal ribosomal protein uL15 family. As to quaternary structure, part of the 50S ribosomal subunit.

In terms of biological role, binds to the 23S rRNA. This Shewanella denitrificans (strain OS217 / ATCC BAA-1090 / DSM 15013) protein is Large ribosomal subunit protein uL15.